The chain runs to 461 residues: Argininosuccinate lyase (461 aa).

This sequence belongs to the lyase 1 family. Argininosuccinate lyase subfamily.

It is found in the cytoplasm. It catalyses the reaction 2-(N(omega)-L-arginino)succinate = fumarate + L-arginine. The protein operates within amino-acid biosynthesis; L-arginine biosynthesis; L-arginine from L-ornithine and carbamoyl phosphate: step 3/3. This chain is Argininosuccinate lyase, found in Syntrophotalea carbinolica (strain DSM 2380 / NBRC 103641 / GraBd1) (Pelobacter carbinolicus).